A 157-amino-acid polypeptide reads, in one-letter code: Phosphopantetheine adenylyltransferase (157 aa).

T10 contributes to the substrate binding site. ATP contacts are provided by residues T10 to F11 and H18. Substrate-binding residues include K42, L74, and R88. Residues G89–R91, E99, and N124–S130 contribute to the ATP site.

It belongs to the bacterial CoaD family. Homohexamer. Mg(2+) is required as a cofactor.

It localises to the cytoplasm. It catalyses the reaction (R)-4'-phosphopantetheine + ATP + H(+) = 3'-dephospho-CoA + diphosphate. It participates in cofactor biosynthesis; coenzyme A biosynthesis; CoA from (R)-pantothenate: step 4/5. Reversibly transfers an adenylyl group from ATP to 4'-phosphopantetheine, yielding dephospho-CoA (dPCoA) and pyrophosphate. The protein is Phosphopantetheine adenylyltransferase of Helicobacter pylori (strain Shi470).